Consider the following 491-residue polypeptide: 2,3-bisphosphoglycerate-independent phosphoglycerate mutase (491 aa).

Mn(2+)-binding residues include D11 and S61. The active-site Phosphoserine intermediate is S61. Substrate contacts are provided by residues H118, 147–148, R177, R183, 248–251, and K320; these read RD and RSDR. Mn(2+)-binding residues include D386, H390, D427, H428, and H445.

This sequence belongs to the BPG-independent phosphoglycerate mutase family. Monomer. Requires Mn(2+) as cofactor.

The enzyme catalyses (2R)-2-phosphoglycerate = (2R)-3-phosphoglycerate. It participates in carbohydrate degradation; glycolysis; pyruvate from D-glyceraldehyde 3-phosphate: step 3/5. Functionally, catalyzes the interconversion of 2-phosphoglycerate and 3-phosphoglycerate. The chain is 2,3-bisphosphoglycerate-independent phosphoglycerate mutase from Aliarcobacter butzleri (strain RM4018) (Arcobacter butzleri).